The sequence spans 516 residues: MKKKNIYSIRKLGVGIASVTLGTLLISGGVTPAANAAQHDEAQQNAFYQVLNMPNLNADQRNGFIQSLKDDPSQSANVLGEAQKLNDSQAPKADAQQNNFNKDQQSAFYEILNMPNLNEAQRNGFIQSLKDDPSQSTNVLGEAKKLNESQAPKADNNFNKEQQNAFYEILNMPNLNEEQRNGFIQSLKDDPSQSANLLSEAKKLNESQAPKADNKFNKEQQNAFYEILHLPNLNEEQRNGFIQSLKDDPSQSANLLAEAKKLNDAQAPKADNKFNKEQQNAFYEILHLPNLTEEQRNGFIQSLKDDPSVSKEILAEAKKLNDAQAPKEEDNNKPGKEDNNKPGKEDNNKPGKEDNNKPGKEDNNKPGKEDGNKPGKEDNKKPGKEDGNKPGKEDNKKPGKEDGNKPGKEDGNKPGKEDGNGVHVVKPGDTVNDIAKANGTTADKIAADNKLADKNMIKPGQELVVDKKQPANHADANKAQALPETGEENPFIGTTVFGGLSLALGAALLAGRRREL.

The N-terminal stretch at 1–36 is a signal peptide; sequence MKKKNIYSIRKLGVGIASVTLGTLLISGGVTPAANA. A YSIRK-G/S signaling motif motif is present at residues 7–18; the sequence is YSIRKLGVGIAS. The stretch at 37–92 is one Immunoglobulin-binding region E repeat; sequence AQHDEAQQNAFYQVLNMPNLNADQRNGFIQSLKDDPSQSANVLGEAQKLNDSQAPK. The Immunoglobulin-binding region D repeat unit spans residues 93-153; the sequence is ADAQQNNFNK…KKLNESQAPK (61 aa). Residues 154–211 form an Immunoglobulin-binding region A repeat; it reads ADNNFNKEQQNAFYEILNMPNLNEEQRNGFIQSLKDDPSQSANLLSEAKKLNESQAPK. The Immunoglobulin-binding region B repeat unit spans residues 212–269; the sequence is ADNKFNKEQQNAFYEILHLPNLNEEQRNGFIQSLKDDPSQSANLLAEAKKLNDAQAPK. An Immunoglobulin-binding region C repeat occupies 270-327; the sequence is ADNKFNKEQQNAFYEILHLPNLTEEQRNGFIQSLKDDPSVSKEILAEAKKLNDAQAPK. The segment covering 318 to 420 has biased composition (basic and acidic residues); the sequence is KKLNDAQAPK…GNKPGKEDGN (103 aa). Disordered stretches follow at residues 318–440 and 467–487; these read KKLN…ANGT and KKQPANHADANKAQALPETGE. Repeat copies occupy residues 333–340, 341–348, 349–356, 357–364, 365–372, 373–380, 381–388, 389–396, 397–404, 405–412, and 413–420. The segment at 333-420 is 11 X 8 AA approximate tandem repeats; that stretch reads KPGKEDNNKP…GNKPGKEDGN (88 aa). Residues 421-465 form the LysM domain; the sequence is GVHVVKPGDTVNDIAKANGTTADKIAADNKLADKNMIKPGQELVV. Positions 482–486 match the LPXTG sorting signal motif; it reads LPETG. Pentaglycyl murein peptidoglycan amidated threonine is present on Thr-485. The propeptide at 486 to 516 is removed by sortase A; it reads GEENPFIGTTVFGGLSLALGAALLAGRRREL.

It belongs to the immunoglobulin-binding protein SpA family. In terms of assembly, interacts with host TNFRSF1A; this interaction leads to the stimulation of both surface expression and shedding of TNFRSF1A.

The protein resides in the secreted. The protein localises to the cell wall. Functionally, plays a role in the inhibition of the host innate and adaptive immune responses. Possesses five immunoglobulin-binding domains that capture both the fragment crystallizable region (Fc region) and the Fab region (part of Ig that identifies antigen) of immunoglobulins. In turn, Staphylococcus aureus is protected from phagocytic killing via inhibition of Ig Fc region. In addition, the host elicited B-cell response is prevented due to a decrease of antibody-secreting cell proliferation that enter the bone marrow, thereby decreasing long-term antibody production. Inhibits osteogenesis by preventing osteoblast proliferation and expression of alkaline phosphatase, type I collagen, osteopontin and osteocalcin. Acts directly as a pro-inflammatory factor in the lung through its ability to bind and activate tumor necrosis factor alpha receptor 1/TNFRSF1A. The chain is Immunoglobulin G-binding protein A (spa) from Staphylococcus aureus (strain NCTC 8325 / PS 47).